The sequence spans 286 residues: Carbohydrate-binding domain-containing protein Cthe_2159 (286 aa).

The signal sequence occupies residues 1 to 20; the sequence is MSIKKLILAASILTTLALTG. Cys-21 is lipidated: N-palmitoyl cysteine. Cys-21 carries S-diacylglycerol cysteine lipidation. Positions 124-225 are polygalacturonic acid-binding; the sequence is GKDNVLTDAE…GIKVENTEEP (102 aa). Residues Arg-152, Asp-153, Asp-154, Asn-177, Asp-178, Asp-215, Asp-243, Asp-244, and Asp-247 each coordinate Ca(2+).

As to quaternary structure, monomer.

It localises to the cell membrane. In terms of biological role, binds cellulosic and pectic substrates. Displays no enzyme activity (in vitro). This is Carbohydrate-binding domain-containing protein Cthe_2159 from Acetivibrio thermocellus (strain ATCC 27405 / DSM 1237 / JCM 9322 / NBRC 103400 / NCIMB 10682 / NRRL B-4536 / VPI 7372) (Clostridium thermocellum).